We begin with the raw amino-acid sequence, 296 residues long: Protoheme IX farnesyltransferase (296 aa).

Residues 1–9 (MMFKQYLQV) lie on the Cytoplasmic side of the membrane. A helical transmembrane segment spans residues 10–28 (TKPGIIFGNLISVIGGFLL). The Periplasmic portion of the chain corresponds to 29-37 (ASKGSIDYP). The chain crosses the membrane as a helical span at residues 38-56 (LFIYTLVGVSLVVASGCVF). The Cytoplasmic portion of the chain corresponds to 57–78 (NNYIDRDIDRKMERTKNRVLVK). Residues 79–97 (GLISPGVSLVYATLLGIAG) traverse the membrane as a helical segment. Topologically, residues 98 to 107 (FMLLWFGANP) are periplasmic. A helical membrane pass occupies residues 108-126 (LACWLGVMGFVVYVGVYSL). The Cytoplasmic portion of the chain corresponds to 127–197 (YMKRHSVYGT…YQAANIPVLP (71 aa)). The helical transmembrane segment at 198 to 216 (VVKGISVAKNHITLYIIAF) threads the bilayer. The Periplasmic portion of the chain corresponds to 217-228 (AVATLMLTLGGY). The helical transmembrane segment at 229–247 (AGYKYLVVAAAVSVWWLGM) threads the bilayer. Residues 248 to 268 (ALRGYKVEDDKVWARKLFGFS) lie on the Cytoplasmic side of the membrane. A helical transmembrane segment spans residues 269 to 287 (IIAITALSIMMSVDFMVPN). Residues 288 to 296 (SQNLLTYVW) lie on the Periplasmic side of the membrane.

This sequence belongs to the UbiA prenyltransferase family. Protoheme IX farnesyltransferase subfamily.

Its subcellular location is the cell inner membrane. The enzyme catalyses heme b + (2E,6E)-farnesyl diphosphate + H2O = Fe(II)-heme o + diphosphate. It functions in the pathway porphyrin-containing compound metabolism; heme O biosynthesis; heme O from protoheme: step 1/1. Its function is as follows. Converts heme B (protoheme IX) to heme O by substitution of the vinyl group on carbon 2 of heme B porphyrin ring with a hydroxyethyl farnesyl side group. This Salmonella typhimurium (strain LT2 / SGSC1412 / ATCC 700720) protein is Protoheme IX farnesyltransferase.